A 121-amino-acid polypeptide reads, in one-letter code: Large ribosomal subunit protein mL52 (121 aa).

The N-terminal 22 residues, 1-22, are a transit peptide targeting the mitochondrion; the sequence is MAALGTWLSSVRRLHCSVVARA. Over residues 98–109 the composition is skewed to basic and acidic residues; that stretch reads QEERKKEHDLKP. The tract at residues 98-121 is disordered; it reads QEERKKEHDLKPKGTLLRSPLPNQ.

It belongs to the mitochondrion-specific ribosomal protein mL52 family. Component of the mitochondrial ribosome large subunit (39S) which comprises a 16S rRNA and about 50 distinct proteins.

The protein resides in the mitochondrion. The chain is Large ribosomal subunit protein mL52 (Mrpl52) from Mus musculus (Mouse).